Consider the following 79-residue polypeptide: Acyl carrier protein (79 aa).

The region spanning Glu2–Leu77 is the Carrier domain. Residue Ser37 is modified to O-(pantetheine 4'-phosphoryl)serine.

Belongs to the acyl carrier protein (ACP) family. In terms of processing, 4'-phosphopantetheine is transferred from CoA to a specific serine of apo-ACP by AcpS. This modification is essential for activity because fatty acids are bound in thioester linkage to the sulfhydryl of the prosthetic group.

The protein resides in the cytoplasm. It functions in the pathway lipid metabolism; fatty acid biosynthesis. Carrier of the growing fatty acid chain in fatty acid biosynthesis. The sequence is that of Acyl carrier protein from Laribacter hongkongensis (strain HLHK9).